We begin with the raw amino-acid sequence, 338 residues long: Phosphonates-binding periplasmic protein (338 aa).

Positions 1 to 26 are cleaved as a signal peptide; the sequence is MNAKIIASLAFTSMFSLSTLLSPAHA.

The protein belongs to the phosphate/phosphite/phosphonate binding protein family. The complex is composed of two ATP-binding proteins (PhnC), two transmembrane proteins (PhnE) and a solute-binding protein (PhnD).

It localises to the periplasm. In terms of biological role, phosphonate binding protein that is part of the phosphonate uptake system. Exhibits high affinity for 2-aminoethylphosphonate, and somewhat less affinity to ethylphosphonate, methylphosphonate, phosphonoacetate and phenylphosphonate. In Escherichia coli (strain K12), this protein is Phosphonates-binding periplasmic protein (phnD).